Consider the following 593-residue polypeptide: Tectonic-1 (593 aa).

An N-terminal signal peptide occupies residues 1–22; the sequence is MGSRGLPPLLLVLLNCYTSSST. Positions 37–72 are disordered; that stretch reads KEDLNSTKATPTTLQPSLSPRTPGTPRAPERSGPRP. N41 carries an N-linked (GlcNAc...) asparagine glycan. The span at 42-58 shows a compositional bias: polar residues; sequence STKATPTTLQPSLSPRT. N303 is a glycosylation site (N-linked (GlcNAc...) asparagine). R486 carries the post-translational modification Omega-N-methylarginine. N-linked (GlcNAc...) asparagine glycosylation occurs at N536.

The protein belongs to the tectonic family. Part of the tectonic-like complex (also named B9 complex).

Its subcellular location is the cytoplasm. It is found in the cytoskeleton. The protein resides in the cilium basal body. The protein localises to the secreted. Component of the tectonic-like complex, a complex localized at the transition zone of primary cilia and acting as a barrier that prevents diffusion of transmembrane proteins between the cilia and plasma membranes. Regulator of Hedgehog (Hh), required for both activation and inhibition of the Hh pathway in the patterning of the neural tube. During neural tube development, it is required for formation of the most ventral cell types and for full Hh pathway activation. Functions in Hh signal transduction to fully activate the pathway in the presence of high Hh levels and to repress the pathway in the absence of Hh signals. Modulates Hh signal transduction downstream of SMO and RAB23. In Mus musculus (Mouse), this protein is Tectonic-1 (Tctn1).